A 280-amino-acid polypeptide reads, in one-letter code: MDRRWKVMTDQTASSELRVAIAGLGSIGTKIAAALDQGEGLTLSAVAVRDPAKHQAFLNGLRRPPQVLPIDQLGEAADIVVECAPSSQLRAIVEPAVKRGKAAVVVSVGGLLDNFDLVDLARANGGRIIVPTGALIGLDAVNAAVIGTIHSVKMVTRKPIDGLKGAPFIVHNNIDIDTLREPLKLFEGTAREAAKGFPANLNVAVALSLAGVGPDRTSVQIWADPTVTRNVHRIEVEADSARFSMSIENIPSENPKTGLITALSVIALLRKQRATLCVGT.

Ala134 and Asn202 together coordinate NAD(+). Residue His232 is part of the active site.

The protein belongs to the L-aspartate dehydrogenase family.

It carries out the reaction L-aspartate + NADP(+) + H2O = oxaloacetate + NH4(+) + NADPH + H(+). The enzyme catalyses L-aspartate + NAD(+) + H2O = oxaloacetate + NH4(+) + NADH + H(+). The protein operates within cofactor biosynthesis; NAD(+) biosynthesis; iminoaspartate from L-aspartate (dehydrogenase route): step 1/1. In terms of biological role, specifically catalyzes the NAD or NADP-dependent dehydrogenation of L-aspartate to iminoaspartate. This Bradyrhizobium diazoefficiens (strain JCM 10833 / BCRC 13528 / IAM 13628 / NBRC 14792 / USDA 110) protein is L-aspartate dehydrogenase.